Here is a 323-residue protein sequence, read N- to C-terminus: Fatty acid desaturase 4, chloroplastic (323 aa).

The N-terminal 77 residues, Met1–Val77, are a transit peptide targeting the chloroplast. The next 2 membrane-spanning stretches (helical) occupy residues Trp101–Phe121 and Leu131–Ile151. A Histidine box-1 motif is present at residues Gln170–His173. The chain crosses the membrane as a helical span at residues Leu204–Phe224. Positions His229–His233 match the Histidine box-2 motif. The Histidine box-3 motif lies at His258–His262.

Belongs to the fatty acid desaturase CarF family. Requires Fe(2+) as cofactor.

The protein localises to the plastid. Its subcellular location is the chloroplast membrane. It catalyses the reaction a 1-acyl-2-hexadecanoyl-glycerolipid + 2 reduced [2Fe-2S]-[ferredoxin] + O2 + 2 H(+) = a 1-acyl-2-[(3E)-hexadec-3-enoyl]-glycerolipid + 2 oxidized [2Fe-2S]-[ferredoxin] + 2 H2O. It functions in the pathway lipid metabolism; fatty acid metabolism. Its function is as follows. Fatty acid desaturase involved in the production of chloroplast-specific phosphatidylglycerol molecular species containing 16:1(3E). Catalyzes the formation of a trans double bond introduced close to the carboxyl group of palmitic acid, which is specifically esterified to the sn-2 glyceryl carbon of phosphatidylglycerol. The sequence is that of Fatty acid desaturase 4, chloroplastic from Arabidopsis thaliana (Mouse-ear cress).